We begin with the raw amino-acid sequence, 623 residues long: Trehalase (623 aa).

It belongs to the glycosyl hydrolase 15 family. In terms of assembly, monomer.

The catalysed reaction is alpha,alpha-trehalose + H2O = alpha-D-glucose + beta-D-glucose. It functions in the pathway glycan degradation; trehalose degradation; D-glucose from alpha,alpha-trehalose: step 1/1. Inhibited by validamycin A. Its function is as follows. Catalyzes the hydrolysis of alpha,alpha-trehalose into two molecules of D-glucose. The chain is Trehalase from Thermoplasma volcanium (strain ATCC 51530 / DSM 4299 / JCM 9571 / NBRC 15438 / GSS1).